Consider the following 245-residue polypeptide: Aliphatic sulfonates import ATP-binding protein SsuB 2 (245 aa).

One can recognise an ABC transporter domain in the interval valine 15–isoleucine 229. Residue glycine 47–serine 54 coordinates ATP.

The protein belongs to the ABC transporter superfamily. Aliphatic sulfonates importer (TC 3.A.1.17.2) family. As to quaternary structure, the complex is composed of two ATP-binding proteins (SsuB), two transmembrane proteins (SsuC) and a solute-binding protein (SsuA).

Its subcellular location is the cell inner membrane. It catalyses the reaction ATP + H2O + aliphatic sulfonate-[sulfonate-binding protein]Side 1 = ADP + phosphate + aliphatic sulfonateSide 2 + [sulfonate-binding protein]Side 1.. In terms of biological role, part of the ABC transporter complex SsuABC involved in aliphatic sulfonates import. Responsible for energy coupling to the transport system. The polypeptide is Aliphatic sulfonates import ATP-binding protein SsuB 2 (Paracoccus denitrificans (strain Pd 1222)).